Reading from the N-terminus, the 307-residue chain is D-alanine--D-alanine ligase (307 aa).

One can recognise an ATP-grasp domain in the interval 110-299 (KQLWKGAGLP…FDVLVGEILL (190 aa)). 136-185 (PVIVKPAHEGSSIGMAKADNTEELGEALVAAEKFDQDVLVEAWVNGPEYT) serves as a coordination point for ATP. Residues Asp-253, Glu-266, and Asn-268 each contribute to the Mg(2+) site.

Belongs to the D-alanine--D-alanine ligase family. Requires Mg(2+) as cofactor. It depends on Mn(2+) as a cofactor.

The protein resides in the cytoplasm. The enzyme catalyses 2 D-alanine + ATP = D-alanyl-D-alanine + ADP + phosphate + H(+). It functions in the pathway cell wall biogenesis; peptidoglycan biosynthesis. Its function is as follows. Cell wall formation. This Alcanivorax borkumensis (strain ATCC 700651 / DSM 11573 / NCIMB 13689 / SK2) protein is D-alanine--D-alanine ligase.